A 306-amino-acid polypeptide reads, in one-letter code: MATH domain and coiled-coil domain-containing protein At3g29580 (306 aa).

In terms of domain architecture, MATH spans 6–132 (DNKFTWVIKN…NGEIKIVVEF (127 aa)). Positions 253–298 (FKLDWLEKKLNEVLEKKEKEESYETRMREIEEEMKDLKAKALDVGA) form a coiled coil.

The protein is MATH domain and coiled-coil domain-containing protein At3g29580 of Arabidopsis thaliana (Mouse-ear cress).